The sequence spans 212 residues: Large ribosomal subunit protein uL3 (212 aa).

Residues 130 to 158 are disordered; that stretch reads KRGSMTHGSKNHRLPGSTGAGTTPGRVYP.

Belongs to the universal ribosomal protein uL3 family. As to quaternary structure, part of the 50S ribosomal subunit. Forms a cluster with proteins L14 and L19.

Functionally, one of the primary rRNA binding proteins, it binds directly near the 3'-end of the 23S rRNA, where it nucleates assembly of the 50S subunit. This Gloeothece citriformis (strain PCC 7424) (Cyanothece sp. (strain PCC 7424)) protein is Large ribosomal subunit protein uL3.